Consider the following 419-residue polypeptide: Serine hydroxymethyltransferase (419 aa).

Residues L121 and G125 to L127 contribute to the (6S)-5,6,7,8-tetrahydrofolate site. The residue at position 229 (K229) is an N6-(pyridoxal phosphate)lysine. S354–F356 contributes to the (6S)-5,6,7,8-tetrahydrofolate binding site.

It belongs to the SHMT family. As to quaternary structure, homodimer. Requires pyridoxal 5'-phosphate as cofactor.

It is found in the cytoplasm. It catalyses the reaction (6R)-5,10-methylene-5,6,7,8-tetrahydrofolate + glycine + H2O = (6S)-5,6,7,8-tetrahydrofolate + L-serine. It participates in one-carbon metabolism; tetrahydrofolate interconversion. The protein operates within amino-acid biosynthesis; glycine biosynthesis; glycine from L-serine: step 1/1. Catalyzes the reversible interconversion of serine and glycine with tetrahydrofolate (THF) serving as the one-carbon carrier. This reaction serves as the major source of one-carbon groups required for the biosynthesis of purines, thymidylate, methionine, and other important biomolecules. Also exhibits THF-independent aldolase activity toward beta-hydroxyamino acids, producing glycine and aldehydes, via a retro-aldol mechanism. This is Serine hydroxymethyltransferase from Coxiella burnetii (strain RSA 331 / Henzerling II).